The chain runs to 307 residues: Membrane protein insertase YidC 2 (307 aa).

The N-terminal stretch at 1-23 (MKLTLNRILFSGLALSILLTLTG) is a signal peptide. Cysteine 24 carries N-palmitoyl cysteine lipidation. The S-diacylglycerol cysteine moiety is linked to residue cysteine 24. 5 consecutive transmembrane segments (helical) span residues 58-78 (LGYG…ILPL), 135-155 (LGGI…AMYF), 179-199 (VLTA…MMAV), 209-225 (TMMY…SFSL), and 231-251 (LYWL…TYLL). A disordered region spans residues 263-307 (YAKNPPKAYQSTSSRKDVTPSQNMEQANLPKKIKSNRNAGKQRKR). A compositionally biased stretch (polar residues) spans 271–288 (YQSTSSRKDVTPSQNMEQ). Positions 293–307 (KKIKSNRNAGKQRKR) are enriched in basic residues.

It belongs to the OXA1/ALB3/YidC family. Type 2 subfamily.

Its subcellular location is the cell membrane. In terms of biological role, required for the insertion and/or proper folding and/or complex formation of integral membrane proteins into the membrane. Involved in integration of membrane proteins that insert both dependently and independently of the Sec translocase complex, as well as at least some lipoproteins. In Streptococcus pyogenes serotype M1, this protein is Membrane protein insertase YidC 2.